A 385-amino-acid chain; its full sequence is Glucose-fructose oxidoreductase domain-containing protein 2 (385 aa).

A signal peptide spans 1 to 25; the sequence is MKMLPGVGVFGTGSSARVLVPLLRA.

Belongs to the Gfo/Idh/MocA family.

It localises to the secreted. The protein resides in the extracellular space. Its subcellular location is the extracellular matrix. Functionally, promotes matrix assembly. The polypeptide is Glucose-fructose oxidoreductase domain-containing protein 2 (GFOD2) (Bos taurus (Bovine)).